A 497-amino-acid polypeptide reads, in one-letter code: Succinate-semialdehyde dehydrogenase [NADP(+)] (497 aa).

Glu264 (proton acceptor) is an active-site residue. Cys298 functions as the Nucleophile in the catalytic mechanism.

This sequence belongs to the aldehyde dehydrogenase family. In terms of assembly, homotetramer.

The protein localises to the cytoplasm. The enzyme catalyses succinate semialdehyde + NAD(+) + H2O = succinate + NADH + 2 H(+). It carries out the reaction succinate semialdehyde + NADP(+) + H2O = succinate + NADPH + 2 H(+). It participates in amino-acid degradation; 4-aminobutanoate degradation. With respect to regulation, inhibited by AMP, ADP anf ATP. Functionally, catalyzes the oxidation of succinate semialdehyde to succinate. Can utilize both NAD(+) or NADP(+) as a coenzyme, but has a 2.5-fold lower activity with NADP(+) than with NAD(+). Functions in a gamma-aminobutyrate (GABA) degradation pathway that allows growth utilizing GABA as a nitrogen source. Functions in the GABA shunt, which allows to bypass 2 reactions in the TCA cycle by removing alpha-ketoglutarate from the cycle and feeding succinate and NADH back into the cycle. This chain is Succinate-semialdehyde dehydrogenase [NADP(+)], found in Saccharomyces cerevisiae (strain ATCC 204508 / S288c) (Baker's yeast).